The primary structure comprises 476 residues: Transmembrane transporter FPSE_08127 (476 aa).

A helical membrane pass occupies residues 72–92; sequence ILAIPAALGALGSIGGSLCII. An N-linked (GlcNAc...) asparagine glycan is attached at Asn-111. Transmembrane regions (helical) follow at residues 133 to 153, 164 to 184, 192 to 212, 231 to 251, 275 to 295, 317 to 337, 364 to 384, 387 to 407, and 431 to 451; these read LVGVQIIIAQTLVTAGGVVAI, GTCTVAFGLISAIAVTAFSAI, WLTWIGFITFVIGVFIFVVAV, WAPIAYPSFVVGMVSVTNIFI, ACLVAGFIVGAMYLSFSLVIY, VAYGVSLPGLILGVGIYQHVA, LGINIALGTAAFIVAEAVPIL, LLGLAGAICLAPFSLIFPALL, and LIMMFGFFMMIAGFYSVVVLI.

Belongs to the amino acid/polyamine transporter 2 family.

The protein localises to the membrane. Functionally, transmembrane transporter; part of the Fusarium detoxification of benzoxazolinone cluster involved in the degradation of benzoxazolinones produced by the host plant. Maize, wheat, and rye produce the 2 benzoxazinone phytoanticipins 2,4-dihy-droxy-7-methoxy-1,4-benzoxazin-3-one (DIMBOA) and 2,4-dihydroxy-1,4-benzoxazin-3-one (DIBOA) that, due to their inherent instability once released, spontaneously degrade to the more stable corresponding benzoxazolinones, 6-methoxy-2-benzoxazolinone (MBOA) and 2-benzoxazolinone (BOA), respectively. FPSE_08127 is proposed to shuttle metabolites of benzoxazolinone degradation. The sequence is that of Transmembrane transporter FPSE_08127 from Fusarium pseudograminearum (strain CS3096) (Wheat and barley crown-rot fungus).